Reading from the N-terminus, the 340-residue chain is Phosphate acyltransferase (340 aa).

This sequence belongs to the PlsX family. As to quaternary structure, homodimer. Probably interacts with PlsY.

It localises to the cytoplasm. The enzyme catalyses a fatty acyl-[ACP] + phosphate = an acyl phosphate + holo-[ACP]. It functions in the pathway lipid metabolism; phospholipid metabolism. In terms of biological role, catalyzes the reversible formation of acyl-phosphate (acyl-PO(4)) from acyl-[acyl-carrier-protein] (acyl-ACP). This enzyme utilizes acyl-ACP as fatty acyl donor, but not acyl-CoA. This chain is Phosphate acyltransferase, found in Pseudomonas savastanoi pv. phaseolicola (strain 1448A / Race 6) (Pseudomonas syringae pv. phaseolicola (strain 1448A / Race 6)).